Here is a 139-residue protein sequence, read N- to C-terminus: Translation initiation factor 2 subunit beta (139 aa).

This sequence belongs to the eIF-2-beta/eIF-5 family. Heterotrimer composed of an alpha, a beta and a gamma chain.

In terms of biological role, eIF-2 functions in the early steps of protein synthesis by forming a ternary complex with GTP and initiator tRNA. The sequence is that of Translation initiation factor 2 subunit beta from Methanococcus aeolicus (strain ATCC BAA-1280 / DSM 17508 / OCM 812 / Nankai-3).